The sequence spans 129 residues: Glycine cleavage system H protein (129 aa).

The region spanning 24–106 (SYTVGITEHA…YGEGWFFRVM (83 aa)) is the Lipoyl-binding domain. Lysine 65 is modified (N6-lipoyllysine).

It belongs to the GcvH family. The glycine cleavage system is composed of four proteins: P, T, L and H. It depends on (R)-lipoate as a cofactor.

In terms of biological role, the glycine cleavage system catalyzes the degradation of glycine. The H protein shuttles the methylamine group of glycine from the P protein to the T protein. The sequence is that of Glycine cleavage system H protein from Shewanella oneidensis (strain ATCC 700550 / JCM 31522 / CIP 106686 / LMG 19005 / NCIMB 14063 / MR-1).